Consider the following 297-residue polypeptide: Putative peptidyl-prolyl cis-trans isomerase YacD (297 aa).

Positions 1-32 (MKSRTIWTIILGALLVCCIAVAYTLTKSQAGA) are cleaved as a signal peptide. The 94-residue stretch at 154–247 (DDSYRIRHIV…NGYAIIQLKE (94 aa)) folds into the PpiC domain.

It carries out the reaction [protein]-peptidylproline (omega=180) = [protein]-peptidylproline (omega=0). In Bacillus subtilis (strain 168), this protein is Putative peptidyl-prolyl cis-trans isomerase YacD (yacD).